The following is a 353-amino-acid chain: MAASAAVFSRLRSGLRLGSRGLCTRLATPPRRAPDQAAEIGSRGSTKAQGPQQQPGSEGPSYAKKVALWLAGLLGAGGTVSVVYIFGNNPVDENGAKIPDEFDNDPILVQQLRRTYKYFKDYRQMIIEPTSPCLLPDPLQEPYYQPPYTLVLELTGVLLHPEWSLATGWRFKKRPGIETLFQQLAPLYEIVIFTSETGMTAFPLIDSVDPHGFISYRLFRDATRYMDGHHVKDISCLNRDPARVVVVDCKKEAFRLQPYNGVALRPWDGNSDDRVLLDLSAFLKTIALNGVEDVRTVLEHYALEDDPLAAFKQRQSRLEQEEQQRLAELSKSNKQNLFLGSLTSRLWPRSKQP.

A mitochondrion-targeting transit peptide spans 1 to 44 (MAASAAVFSRLRSGLRLGSRGLCTRLATPPRRAPDQAAEIGSRG). The interval 25–60 (RLATPPRRAPDQAAEIGSRGSTKAQGPQQQPGSEGP) is disordered. Serine 45 is subject to Phosphoserine. The Mitochondrial matrix portion of the chain corresponds to 45–65 (STKAQGPQQQPGSEGPSYAKK). Residues 49-60 (QGPQQQPGSEGP) show a composition bias toward low complexity. The chain crosses the membrane as a helical span at residues 66-86 (VALWLAGLLGAGGTVSVVYIF). Residues 87 to 353 (GNNPVDENGA…SRLWPRSKQP (267 aa)) lie on the Mitochondrial intermembrane side of the membrane. The FCP1 homology domain maps to 143 to 286 (YYQPPYTLVL…LDLSAFLKTI (144 aa)). Serine 341 bears the Phosphoserine mark.

The protein belongs to the TIM50 family. Component of the TIM23 complex at least composed of TIMM23, TIMM17 (TIMM17A or TIMM17B) and TIMM50; within this complex, directly interacts with TIMM23. The complex interacts with the TIMM44 component of the PAM complex and with DNAJC15. In terms of assembly, interacts with COIL and snRNPs. Widely expressed. Expressed at higher level in brain, kidney and liver (at protein level).

The protein localises to the mitochondrion inner membrane. The protein resides in the nucleus speckle. In terms of biological role, essential component of the TIM23 complex, a complex that mediates the translocation of transit peptide-containing proteins across the mitochondrial inner membrane. Has some phosphatase activity in vitro; however such activity may not be relevant in vivo. Its function is as follows. May participate in the release of snRNPs and SMN from the Cajal body. The polypeptide is Mitochondrial import inner membrane translocase subunit TIM50 (TIMM50) (Homo sapiens (Human)).